Here is a 253-residue protein sequence, read N- to C-terminus: 5'/3'-nucleotidase SurE (253 aa).

A divalent metal cation contacts are provided by D8, D9, S39, and N92.

It belongs to the SurE nucleotidase family. It depends on a divalent metal cation as a cofactor.

The protein localises to the cytoplasm. It carries out the reaction a ribonucleoside 5'-phosphate + H2O = a ribonucleoside + phosphate. The enzyme catalyses a ribonucleoside 3'-phosphate + H2O = a ribonucleoside + phosphate. It catalyses the reaction [phosphate](n) + H2O = [phosphate](n-1) + phosphate + H(+). Its function is as follows. Nucleotidase with a broad substrate specificity as it can dephosphorylate various ribo- and deoxyribonucleoside 5'-monophosphates and ribonucleoside 3'-monophosphates with highest affinity to 3'-AMP. Also hydrolyzes polyphosphate (exopolyphosphatase activity) with the preference for short-chain-length substrates (P20-25). Might be involved in the regulation of dNTP and NTP pools, and in the turnover of 3'-mononucleotides produced by numerous intracellular RNases (T1, T2, and F) during the degradation of various RNAs. In Salmonella typhimurium (strain LT2 / SGSC1412 / ATCC 700720), this protein is 5'/3'-nucleotidase SurE.